A 513-amino-acid chain; its full sequence is ATP synthase subunit alpha (513 aa).

169–176 (GDRQTGKT) lines the ATP pocket.

The protein belongs to the ATPase alpha/beta chains family. F-type ATPases have 2 components, CF(1) - the catalytic core - and CF(0) - the membrane proton channel. CF(1) has five subunits: alpha(3), beta(3), gamma(1), delta(1), epsilon(1). CF(0) has three main subunits: a(1), b(2) and c(9-12). The alpha and beta chains form an alternating ring which encloses part of the gamma chain. CF(1) is attached to CF(0) by a central stalk formed by the gamma and epsilon chains, while a peripheral stalk is formed by the delta and b chains.

The protein localises to the cell inner membrane. It catalyses the reaction ATP + H2O + 4 H(+)(in) = ADP + phosphate + 5 H(+)(out). Its function is as follows. Produces ATP from ADP in the presence of a proton gradient across the membrane. The alpha chain is a regulatory subunit. The sequence is that of ATP synthase subunit alpha from Salmonella paratyphi C (strain RKS4594).